A 173-amino-acid chain; its full sequence is Disulfide bond formation protein B 2 (173 aa).

Residues 1–9 (MSLAGSRLL) lie on the Cytoplasmic side of the membrane. A helical transmembrane segment spans residues 10-26 (FSLVFLVGALASWAAFN). Over 27–44 (LQTGGGLESCSLWSVQRL) the chain is Periplasmic. A helical membrane pass occupies residues 45-61 (LLLALGGVNLLAVIQGP). The Cytoplasmic portion of the chain corresponds to 62 to 67 (GRVGRA). Residues 68 to 85 (VYWGLNLLLGLLGVVTAG) traverse the membrane as a helical segment. Residues 86 to 142 (RHVLLQNIPSEQLLACLPDMSFMLRQLSWWQALKLTFMGTSDCAEVTWTLLDMSLPE) are Periplasmic-facing. C101 and C128 are joined by a disulfide. The helical transmembrane segment at 143–161 (WSLLFFVIMLIFSGYRLWR) threads the bilayer. Over 162-173 (QLRGARKAVALP) the chain is Cytoplasmic.

Belongs to the DsbB family.

It is found in the cell inner membrane. In terms of biological role, required for disulfide bond formation in some periplasmic proteins. Acts by oxidizing the DsbA protein. In Pseudomonas fluorescens (strain ATCC BAA-477 / NRRL B-23932 / Pf-5), this protein is Disulfide bond formation protein B 2.